The chain runs to 147 residues: Leghemoglobin 8 (147 aa).

In terms of domain architecture, Globin spans 2-147; that stretch reads GFTEKQESLV…LAASIKKSMS (146 aa). Y25 and Y30 each carry nitrated tyrosine. S45 lines the heme b pocket. S45 carries the phosphoserine modification. H62 contacts O2. 3 residues coordinate heme b: K65, H94, and K97. Y135 carries the post-translational modification Nitrated tyrosine.

Belongs to the plant globin family. In terms of assembly, monomer. Interacts with CAS31 in the cytoplasm; this interaction leads to its protection from denaturation under thermal and drought stresses. Nitrated in effective nodules and particularly in hypoxic conditions; this mechanism may play a protective role in the symbiosis by buffering toxic peroxynitrite NO(2)(-). Nitration level decrease during nodule senescence. In terms of processing, phosphorylation at Ser-45 disrupts the molecular environment of its porphyrin ring oxygen binding pocket, thus leading to a reduced oxygen consumption and to the delivery of oxygen O(2) to symbiosomes. Root nodules.

It is found in the cytoplasm. The protein localises to the nucleus. In terms of biological role, leghemoglobin that reversibly binds oxygen O(2) through a pentacoordinated heme iron. In root nodules, facilitates the diffusion of oxygen to the bacteroids while preventing the bacterial nitrogenase from being inactivated by buffering dioxygen, nitric oxide and carbon monoxide, and promoting the formation of reactive oxygen species (ROS, e.g. H(2)O(2)). This role is essential for symbiotic nitrogen fixation (SNF). In Medicago truncatula (Barrel medic), this protein is Leghemoglobin 8.